A 544-amino-acid chain; its full sequence is MAKRIIYNENARRALEKGIDILCEAVAVTLGPKGRNVVLEKKFGAPQIINDGVTIAKEIELEDHIENTGVALIRQAASKTNDAAGDGTTTATVLAHAMVKAGLRNVAAGANAITLKKGIDKASDFLVSKIKEMAKPIADSNAIAQVGTISAGNDEEVGKMIADAMDKVGKEGVISLEEGKSMETELEVTEGMRFDKGYISPYFATDTERMEAVLDEPYILLTDKKIGLVQDLVPVLEQIARTGKPLLIIAEDIEKEALATLVVNRLRGVLNVAAVKAPGFGDRRKAMLEDMAVLTNGQLITEDAGLKLENAKLEMLGTARRITINKDTTTIVAEGNEAAVGARCEQIKKQMDETDSTYDKEKLQERLAKLAGGVAVVKVGAATETEMKDKKLRLEDAINATKAAVEEGIVPGGGTTLAHLAPALEQWAASSLSGEELIGANIVAAALTAPLMRIAENAGANGAVVAENVKARAGAEGFNAASGEYVDMLAAGIVDPAKVTRSGLQNAASIAGMVLTTECIVADLPEKKEAAPAGGGMGGGDFDY.

ATP contacts are provided by residues 29–32 (TLGP), 86–90 (DGTTT), Gly-413, 479–481 (NAA), and Asp-495.

It belongs to the chaperonin (HSP60) family. In terms of assembly, forms a cylinder of 14 subunits composed of two heptameric rings stacked back-to-back. Interacts with the co-chaperonin GroES.

The protein localises to the cytoplasm. It carries out the reaction ATP + H2O + a folded polypeptide = ADP + phosphate + an unfolded polypeptide.. Its function is as follows. Together with its co-chaperonin GroES, plays an essential role in assisting protein folding. The GroEL-GroES system forms a nano-cage that allows encapsulation of the non-native substrate proteins and provides a physical environment optimized to promote and accelerate protein folding. This is Chaperonin GroEL 2 from Synechococcus sp. (strain CC9605).